The primary structure comprises 363 residues: 3-dehydroquinate synthase (363 aa).

NAD(+) is bound by residues 107 to 111 (GVIGD), 131 to 132 (TT), lysine 144, and lysine 153. The Zn(2+) site is built by glutamate 186, histidine 251, and histidine 268.

Belongs to the sugar phosphate cyclases superfamily. Dehydroquinate synthase family. NAD(+) is required as a cofactor. Requires Co(2+) as cofactor. The cofactor is Zn(2+).

It is found in the cytoplasm. It catalyses the reaction 7-phospho-2-dehydro-3-deoxy-D-arabino-heptonate = 3-dehydroquinate + phosphate. It participates in metabolic intermediate biosynthesis; chorismate biosynthesis; chorismate from D-erythrose 4-phosphate and phosphoenolpyruvate: step 2/7. Catalyzes the conversion of 3-deoxy-D-arabino-heptulosonate 7-phosphate (DAHP) to dehydroquinate (DHQ). The chain is 3-dehydroquinate synthase from Nostoc sp. (strain PCC 7120 / SAG 25.82 / UTEX 2576).